We begin with the raw amino-acid sequence, 296 residues long: Biliverdin reductase A (296 aa).

Residues 1–2 (MN) constitute a propeptide that is removed on maturation. NADP(+) contacts are provided by residues 16–19 (VGRA), 44–46 (SRR), 77–80 (SSSH), and Tyr-98. At Thr-174 the chain carries Phosphothreonine. Phosphoserine occurs at positions 178 and 230. 2 positions are modified to N6-acetyllysine: Lys-248 and Lys-253. Zn(2+)-binding residues include His-280, Cys-281, Cys-292, and Cys-293.

Belongs to the Gfo/Idh/MocA family. Biliverdin reductase subfamily. In terms of assembly, monomer. Requires Zn(2+) as cofactor. In terms of tissue distribution, liver.

It is found in the cytoplasm. Its subcellular location is the cytosol. It carries out the reaction (4Z,15Z)-bilirubin IXalpha + NAD(+) = biliverdin IXalpha + NADH + H(+). The catalysed reaction is (4Z,15Z)-bilirubin IXalpha + NADP(+) = biliverdin IXalpha + NADPH + H(+). It functions in the pathway porphyrin-containing compound metabolism; protoheme degradation. In terms of biological role, reduces the gamma-methene bridge of the open tetrapyrrole, biliverdin IXalpha, to bilirubin with the concomitant oxidation of a NADH or NADPH cofactor. Does not reduce bilirubin IXbeta. Uses the reactants NADH or NADPH depending on the pH; NADH is used at the acidic pH range (6-6.9) and NADPH at the alkaline range (8.5-8.7). NADPH, however, is the probable reactant in biological systems. The protein is Biliverdin reductase A of Homo sapiens (Human).